Here is an 81-residue protein sequence, read N- to C-terminus: ATP synthase subunit c (81 aa).

A run of 2 helical transmembrane segments spans residues 7–27 (AASV…PGIG) and 57–77 (LAFM…LLFA).

The protein belongs to the ATPase C chain family. In terms of assembly, F-type ATPases have 2 components, F(1) - the catalytic core - and F(0) - the membrane proton channel. F(1) has five subunits: alpha(3), beta(3), gamma(1), delta(1), epsilon(1). F(0) has four main subunits: a(1), b(1), b'(1) and c(10-14). The alpha and beta chains form an alternating ring which encloses part of the gamma chain. F(1) is attached to F(0) by a central stalk formed by the gamma and epsilon chains, while a peripheral stalk is formed by the delta, b and b' chains.

The protein localises to the cellular thylakoid membrane. Its function is as follows. F(1)F(0) ATP synthase produces ATP from ADP in the presence of a proton or sodium gradient. F-type ATPases consist of two structural domains, F(1) containing the extramembraneous catalytic core and F(0) containing the membrane proton channel, linked together by a central stalk and a peripheral stalk. During catalysis, ATP synthesis in the catalytic domain of F(1) is coupled via a rotary mechanism of the central stalk subunits to proton translocation. Key component of the F(0) channel; it plays a direct role in translocation across the membrane. A homomeric c-ring of between 10-14 subunits forms the central stalk rotor element with the F(1) delta and epsilon subunits. This Nostoc sp. (strain PCC 7120 / SAG 25.82 / UTEX 2576) protein is ATP synthase subunit c.